We begin with the raw amino-acid sequence, 291 residues long: Small ribosomal subunit protein uS2 (291 aa).

The segment at 270 to 291 (NINEEANTEFEQALSDADEDKN) is disordered.

It belongs to the universal ribosomal protein uS2 family.

This chain is Small ribosomal subunit protein uS2, found in Rickettsia bellii (strain OSU 85-389).